We begin with the raw amino-acid sequence, 230 residues long: Ion-translocating oxidoreductase complex subunit E (230 aa).

The next 5 membrane-spanning stretches (helical) occupy residues 39–59, 69–89, 93–113, 124–144, and 182–202; these read LGLG…VSLV, IPVF…LMNA, GLYL…IIIG, VLPA…VLVV, and AFLL…LIAA.

Belongs to the NqrDE/RnfAE family. The complex is composed of six subunits: RnfA, RnfB, RnfC, RnfD, RnfE and RnfG.

Its subcellular location is the cell inner membrane. In terms of biological role, part of a membrane-bound complex that couples electron transfer with translocation of ions across the membrane. In Vibrio cholerae serotype O1 (strain ATCC 39315 / El Tor Inaba N16961), this protein is Ion-translocating oxidoreductase complex subunit E.